The following is a 143-amino-acid chain: Small ribosomal subunit protein uS11c (143 aa).

This sequence belongs to the universal ribosomal protein uS11 family. In terms of assembly, part of the 30S ribosomal subunit.

The protein resides in the plastid. It localises to the chloroplast. The protein is Small ribosomal subunit protein uS11c of Zea mays (Maize).